The following is a 492-amino-acid chain: Probable G-protein coupled receptor Mth-like 8 (492 aa).

The signal sequence occupies residues 1 to 21 (MAQFCILGVLLILSGTHCSWG). Topologically, residues 22–218 (FHEETHYPCA…FVLGVREWTY (197 aa)) are extracellular. 4 disulfide bridges follow: cysteine 30–cysteine 82, cysteine 84–cysteine 89, cysteine 93–cysteine 184, and cysteine 94–cysteine 107. N-linked (GlcNAc...) asparagine glycosylation is found at asparagine 37 and asparagine 51. N-linked (GlcNAc...) asparagine glycosylation is found at asparagine 129, asparagine 169, and asparagine 192. Residues 219 to 239 (AICLLIAILSMFIVLMVYLMC) traverse the membrane as a helical segment. Topologically, residues 240–245 (SEMRNS) are cytoplasmic. The chain crosses the membrane as a helical span at residues 246-266 (FYGVAIKAYAICMILGYALLA). Over 267 to 282 (YLTLHNPANLSNAACR) the chain is Extracellular. A glycan (N-linked (GlcNAc...) asparagine) is linked at asparagine 275. Residues 283–303 (ILPSLALMNLVLSFYILSFIA) form a helical membrane-spanning segment. Residues 304–317 (FKLYLSFYGVVFTK) lie on the Cytoplasmic side of the membrane. The helical transmembrane segment at 318–338 (LMFWLIFTPIVLVAVGWSFFV) threads the bilayer. The Extracellular portion of the chain corresponds to 339-362 (GFSYYGSRLIFGGDTCWFDPRNWS). Asparagine 360 carries an N-linked (GlcNAc...) asparagine glycan. Residues 363–383 (VMIYFYAPVFVACAISGFFYV) traverse the membrane as a helical segment. Residues 384–411 (LSQIYIRDQPDIETEKSFESIEKNRFKS) lie on the Cytoplasmic side of the membrane. A helical membrane pass occupies residues 412-432 (FWKYFGYTAVVWVVCICSFAF). The Extracellular portion of the chain corresponds to 433 to 441 (NYYWENRSH). Asparagine 438 carries N-linked (GlcNAc...) asparagine glycosylation. The chain crosses the membrane as a helical span at residues 442–462 (LNYAVSFCMAFHGFAALYALI). The Cytoplasmic segment spans residues 463–492 (GKNQQIQNFLRRIDNGEDTCENSVPLSSFG).

Belongs to the G-protein coupled receptor 2 family. Mth subfamily.

The protein localises to the cell membrane. This Drosophila melanogaster (Fruit fly) protein is Probable G-protein coupled receptor Mth-like 8 (mthl8).